The chain runs to 361 residues: Epi-isozizaene synthase (361 aa).

Mg(2+) is bound by residues D99, D103, N240, S244, and E248. The short motif at 99–103 is the DDXXD motif element; the sequence is DDRHD.

The protein belongs to the terpene synthase family. Mg(2+) is required as a cofactor. Mn(2+) serves as cofactor. Requires Fe(3+) as cofactor.

It carries out the reaction (2E,6E)-farnesyl diphosphate = (+)-epi-isozizaene + diphosphate. The protein operates within sesquiterpene biosynthesis; epi-isozizaene biosynthesis. In terms of biological role, catalyzes the cyclization of farnesyl diphosphate (FPP) to the sesquiterpene epi-isozizaene. The sequence is that of Epi-isozizaene synthase (cyc1) from Streptomyces coelicolor (strain ATCC BAA-471 / A3(2) / M145).